Reading from the N-terminus, the 161-residue chain is Regulator of ribonuclease activity A (161 aa).

The protein belongs to the RraA family. In terms of assembly, homotrimer. Binds to both RNA-binding sites in the C-terminal region of Rne and to RhlB.

Its subcellular location is the cytoplasm. Functionally, globally modulates RNA abundance by binding to RNase E (Rne) and regulating its endonucleolytic activity. Can modulate Rne action in a substrate-dependent manner by altering the composition of the degradosome. Modulates RNA-binding and helicase activities of the degradosome. In Shewanella denitrificans (strain OS217 / ATCC BAA-1090 / DSM 15013), this protein is Regulator of ribonuclease activity A.